A 357-amino-acid polypeptide reads, in one-letter code: Peptide chain release factor 1 (357 aa).

Glutamine 232 carries the post-translational modification N5-methylglutamine.

It belongs to the prokaryotic/mitochondrial release factor family. Methylated by PrmC. Methylation increases the termination efficiency of RF1.

The protein localises to the cytoplasm. Its function is as follows. Peptide chain release factor 1 directs the termination of translation in response to the peptide chain termination codons UAG and UAA. The polypeptide is Peptide chain release factor 1 (Oleidesulfovibrio alaskensis (strain ATCC BAA-1058 / DSM 17464 / G20) (Desulfovibrio alaskensis)).